Reading from the N-terminus, the 1189-residue chain is Lysine-specific demethylase hairless (1189 aa).

Disordered regions lie at residues 1 to 40 (MEST…HHGP), 236 to 257 (HLQR…EMGA), 349 to 377 (EGGA…SHHT), 414 to 480 (AGSP…LQDP), and 505 to 552 (GEGG…RLST). Over residues 239–254 (RAGEAERPSLHQRDGE) the composition is skewed to basic and acidic residues. Residues 457–469 (KDVDSGQHDEQKG) are compositionally biased toward basic and acidic residues. Positions 566–570 (LCRLL) match the LXXLL motif 1 motif. The segment at 600–625 (CSRCHHGLFNTHWRCPRCSHRLCVAC) adopts a C6-type zinc-finger fold. A disordered region spans residues 702–750 (GDAGQQKESTQKTPPTPQPSCNGDTHRTKSIKEETPDSAETPAEDRAGR). Residues 725 to 736 (DTHRTKSIKEET) are compositionally biased toward basic and acidic residues. The short motif at 758 to 762 (LCELL) is the LXXLL motif 2 element. The JmjC domain occupies 946-1157 (DTSRVENLAA…LSAQLCHQGP (212 aa)). Residues cysteine 1007, glutamate 1009, and histidine 1125 each coordinate Fe cation.

Fe(2+) serves as cofactor. As to expression, strongest expression of isoforms 1 and 2 is seen in the small intestine, weaker expression in brain and colon, and trace expression is found in liver, pancreas, spleen, thymus, stomach, salivary gland, appendix and trachea. Isoform 1 is always the most abundant. Isoform 1 is exclusively expressed at low levels in kidney and testis. Isoform 2 is exclusively expressed at high levels in the skin.

Its subcellular location is the nucleus. The catalysed reaction is N(6),N(6)-dimethyl-L-lysyl(9)-[histone H3] + 2 2-oxoglutarate + 2 O2 = L-lysyl(9)-[histone H3] + 2 formaldehyde + 2 succinate + 2 CO2. Its function is as follows. Histone demethylase that specifically demethylates both mono- and dimethylated 'Lys-9' of histone H3. May act as a transcription regulator controlling hair biology (via targeting of collagens), neural activity, and cell cycle. The sequence is that of Lysine-specific demethylase hairless (HR) from Homo sapiens (Human).